We begin with the raw amino-acid sequence, 202 residues long: P25 protein (202 aa).

In terms of domain architecture, Flavodoxin-like spans 7–195 (VAIVIYSTYG…EIARIQGETF (189 aa)). Serine 181 is subject to Phosphoserine.

Belongs to the WrbA family. Homodimer.

Its function is as follows. Unknown. Target of pap1 transcription factor. Confers brefeldin A resistance in S.pombe. This is P25 protein (obr1) from Schizosaccharomyces pombe (strain 972 / ATCC 24843) (Fission yeast).